A 136-amino-acid chain; its full sequence is T-cell receptor beta chain V region LB2 (136 aa).

An N-terminal signal peptide occupies residues 1–21 (MNKWVFCWVTLCLLTVETTHG). The segment at 22-116 (DGGIITQTPK…EMTVFLCASS (95 aa)) is v segment. Residues Cys-45 and Cys-113 are joined by a disulfide bond. Positions 117-120 (IRLA) are d segment. The segment at 121-136 (SAETLYFGSGTRLTVL) is j segment.

The chain is T-cell receptor beta chain V region LB2 from Mus musculus (Mouse).